The sequence spans 127 residues: MLQLLLAVFIGGGTGSVARWLLSMRFNPLHQAIPLGTLTANLIGAFIIGIGFAWFSRMTNIDPVWKVLITTGFCGGLTTFSTFSAEVVFLLQEGRFGWALLNVFVNLLGSFAMTALAFWLFSASTAH.

A run of 4 helical transmembrane segments spans residues 4–24, 35–55, 71–91, and 103–123; these read LLLA…LLSM, LGTL…FAWF, TGFC…VFLL, and VFVN…LFSA. Residues Gly-75 and Thr-78 each contribute to the Na(+) site.

It belongs to the fluoride channel Fluc/FEX (TC 1.A.43) family.

The protein localises to the cell inner membrane. It catalyses the reaction fluoride(in) = fluoride(out). Na(+) is not transported, but it plays an essential structural role and its presence is essential for fluoride channel function. Functionally, fluoride-specific ion channel. Important for reducing fluoride concentration in the cell, thus reducing its toxicity. This chain is Fluoride-specific ion channel FluC, found in Escherichia coli (strain K12 / MC4100 / BW2952).